Here is a 210-residue protein sequence, read N- to C-terminus: Large ribosomal subunit protein uL3 (210 aa).

The tract at residues 133–152 (ATHGNSLSHRVHGSTGQNQT) is disordered. N5-methylglutamine is present on glutamine 151.

Belongs to the universal ribosomal protein uL3 family. In terms of assembly, part of the 50S ribosomal subunit. Forms a cluster with proteins L14 and L19. Post-translationally, methylated by PrmB.

In terms of biological role, one of the primary rRNA binding proteins, it binds directly near the 3'-end of the 23S rRNA, where it nucleates assembly of the 50S subunit. The chain is Large ribosomal subunit protein uL3 from Francisella philomiragia subsp. philomiragia (strain ATCC 25017 / CCUG 19701 / FSC 153 / O#319-036).